A 296-amino-acid chain; its full sequence is Ribosomal RNA small subunit methyltransferase H (296 aa).

S-adenosyl-L-methionine is bound by residues 30–32 (GGH), D49, F77, D95, and Q102.

Belongs to the methyltransferase superfamily. RsmH family.

It is found in the cytoplasm. It catalyses the reaction cytidine(1402) in 16S rRNA + S-adenosyl-L-methionine = N(4)-methylcytidine(1402) in 16S rRNA + S-adenosyl-L-homocysteine + H(+). Its function is as follows. Specifically methylates the N4 position of cytidine in position 1402 (C1402) of 16S rRNA. The polypeptide is Ribosomal RNA small subunit methyltransferase H (Hydrogenobaculum sp. (strain Y04AAS1)).